We begin with the raw amino-acid sequence, 308 residues long: NADH-cytochrome b5 reductase 1 (308 aa).

The chain crosses the membrane as a helical span at residues 29–49 (VASSPAFLVAAAAIVIAAAFY). The region spanning 64 to 167 (SIWKEFPLQK…KGPKGNFKYT (104 aa)) is the FAD-binding FR-type domain. FAD-binding positions include 147 to 162 (ASLK…GPKG) and 173 to 205 (HLGM…NITL).

This sequence belongs to the flavoprotein pyridine nucleotide cytochrome reductase family. In terms of assembly, monomer. Component of the 2-(3-amino-3-carboxypropyl)histidine synthase complex composed of DPH1, DPH2, DPH3 and a NADH-dependent reductase, predominantly MCR1.1. FAD serves as cofactor.

It localises to the mitochondrion outer membrane. The enzyme catalyses 2 Fe(III)-[cytochrome b5] + NADH = 2 Fe(II)-[cytochrome b5] + NAD(+) + H(+). The catalysed reaction is 2 Fe(3+)-[Dph3] + NADH = 2 Fe(2+)-[Dph3] + NAD(+) + H(+). It functions in the pathway protein modification; peptidyl-diphthamide biosynthesis. Functionally, NADH-dependent reductase for DPH3 and cytochrome b5. Required for the first step of diphthamide biosynthesis, a post-translational modification of histidine which occurs in elongation factor 2. DPH1 and DPH2 transfer a 3-amino-3-carboxypropyl (ACP) group from S-adenosyl-L-methionine (SAM) to a histidine residue, the reaction is assisted by a reduction system comprising DPH3 and a NADH-dependent reductase, predominantly MCR1.1. By reducing DPH3, also involved in the formation of the tRNA wobble base modification mcm5s 2U (5-methoxycarbonylmethyl-2-thiouridine), mediated by the elongator complex. The cytochrome b5/NADH cytochrome b5 reductase electron transfer system supports the catalytic activity of several sterol biosynthetic enzymes. This Laccaria bicolor (strain S238N-H82 / ATCC MYA-4686) (Bicoloured deceiver) protein is NADH-cytochrome b5 reductase 1 (MCR1.1).